A 384-amino-acid polypeptide reads, in one-letter code: Dimethyladenosine transferase (384 aa).

Residues 1-24 form a disordered region; sequence MPKTAKNKRNNAASGPYDKKSKGS. The S-adenosyl-L-methionine site is built by H39, L41, G66, E87, D115, and N131. Residues 289-309 are disordered; that stretch reads MDANSDTDNDNDGDAMEEDDD.

This sequence belongs to the class I-like SAM-binding methyltransferase superfamily. rRNA adenine N(6)-methyltransferase family.

The protein resides in the cytoplasm. It is found in the nucleus. It localises to the nucleolus. It catalyses the reaction adenosine(1779)/adenosine(1780) in 18S rRNA + 4 S-adenosyl-L-methionine = N(6)-dimethyladenosine(1779)/N(6)-dimethyladenosine(1780) in 18S rRNA + 4 S-adenosyl-L-homocysteine + 4 H(+). Functionally, specifically dimethylates two adjacent adenosines in the loop of a conserved hairpin near the 3'-end of 18S rRNA in the 40S particle. The protein is Dimethyladenosine transferase (DIM1) of Chaetomium thermophilum (strain DSM 1495 / CBS 144.50 / IMI 039719) (Thermochaetoides thermophila).